The following is a 313-amino-acid chain: Olfactory receptor 1J1 (313 aa).

Over 1–25 (MRLKNHSSVSEFLLLGFPIRPEQGG) the chain is Extracellular. N5 carries N-linked (GlcNAc...) asparagine glycosylation. Residues 26 to 46 (IFFSLFLAMYLITVLGNLLII) traverse the membrane as a helical segment. The Cytoplasmic portion of the chain corresponds to 47–57 (LLIRLDSHLHT). The chain crosses the membrane as a helical span at residues 58–78 (PMYFFLSHLAFTDISFSSVTV). Residues 79–97 (PKMLTKVQNQPIPITYEEC) are Extracellular-facing. Cysteines 97 and 189 form a disulfide. A helical transmembrane segment spans residues 98–118 (VSQTYFFIFFADLDSFLITSM). Residues 119-142 (AYDRYMAICHPLHYITIMSQSRCA) lie on the Cytoplasmic side of the membrane. Residues 143-163 (MLVAVSWVIASACALLHSLLL) form a helical membrane-spanning segment. Topologically, residues 164–196 (DQLSFCADHTVPHFFCDLGALLKLSCSDTSLNQ) are extracellular. The helical transmembrane segment at 197–217 (LVIFTAGLAAIMLPFLCILIS) threads the bilayer. Residues 218–240 (YGRIGFTILQVPTTKGICKALST) lie on the Cytoplasmic side of the membrane. A helical membrane pass occupies residues 241-261 (CGSHLSVVALYYGSIIGLYFL). The Extracellular segment spans residues 262–271 (PPSNSKINNN). The helical transmembrane segment at 272–292 (IVASVMYTVVTPMLNPFIYSL) threads the bilayer. Residues 293–313 (RNKDMKGALKKLLSKKTEFSK) lie on the Cytoplasmic side of the membrane.

It belongs to the G-protein coupled receptor 1 family.

It is found in the cell membrane. Odorant receptor. The chain is Olfactory receptor 1J1 from Mus musculus (Mouse).